The following is a 115-amino-acid chain: DNA-directed RNA polymerase II subunit RPB11-b1 (115 aa).

Belongs to the archaeal Rpo11/eukaryotic RPB11/RPC19 RNA polymerase subunit family. As to quaternary structure, component of the RNA polymerase II (Pol II) complex consisting of 12 subunits. Ubiquitously expressed.

The protein resides in the nucleus. Functionally, DNA-dependent RNA polymerase catalyzes the transcription of DNA into RNA using the four ribonucleoside triphosphates as substrates. Component of RNA polymerase II which synthesizes mRNA precursors and many functional non-coding RNAs. Pol II is the central component of the basal RNA polymerase II transcription machinery. It is composed of mobile elements that move relative to each other. RPB11 is part of the core element with the central large cleft. This is DNA-directed RNA polymerase II subunit RPB11-b1 (POLR2J2) from Homo sapiens (Human).